The primary structure comprises 712 residues: Glycine--tRNA ligase beta subunit (712 aa).

It belongs to the class-II aminoacyl-tRNA synthetase family. Tetramer of two alpha and two beta subunits.

It is found in the cytoplasm. It catalyses the reaction tRNA(Gly) + glycine + ATP = glycyl-tRNA(Gly) + AMP + diphosphate. The chain is Glycine--tRNA ligase beta subunit from Dechloromonas aromatica (strain RCB).